Reading from the N-terminus, the 750-residue chain is Olfactomedin-like protein 2B (750 aa).

A signal peptide spans 1-22; sequence MAKPRLLVLYFALIVVPAWVSS. 2 coiled-coil regions span residues 40–68 and 179–213; these read AEDE…KVKA and KLEE…GKEN. N-linked (GlcNAc...) asparagine glycosylation is found at N187 and N213. Disordered regions lie at residues 346–437 and 452–484; these read TRRP…PPAV and VPPT…PEEE. Polar residues-rich tracts occupy residues 354–384 and 393–413; these read QGHS…SDPS and PTLQ…LQPS. The span at 416–430 shows a compositional bias: low complexity; sequence VPATTVAHTATQQPA. The region spanning 493–750 is the Olfactomedin-like domain; that stretch reads RCKDTLSTIT…QVTYHVIFAY (258 aa). C494 and C680 are disulfide-bonded. Residue N695 is glycosylated (N-linked (GlcNAc...) asparagine).

As to quaternary structure, homodimer. Binds to heparin and chondroitin sulfate E. Post-translationally, O-glycosylated and N-glycosylated.

The protein resides in the secreted. The sequence is that of Olfactomedin-like protein 2B (OLFML2B) from Homo sapiens (Human).